A 397-amino-acid polypeptide reads, in one-letter code: MIRYFTAGESHGPALSAIVEGMPAGISIAPEDINDELARRQRGYGRGGRMNIETDTAAVLSGIRFGKTIGSPITLQIENRDWKNWTVKMAQFEQPEENIPAITIPRPGHADLTGMIKYGFQDIRPVIERASARETAARVAACSLAKVFLRHAGIQIGSYVSAIGPAGEIAPSPKMQELLSQGAASLSRAADASCVRMLDKENEEAAIAAIDKAKEDGDTLGGIIEVFITGVPLGLGTYVQHDRRLDAALAAALLSIQAVKGVEIGSAFDNARRPGSQVHDEMYVEDGSAPVRKTNRAGGIEGSMSNGQVIHLRAAMKPIATLMSPLHSFDLSSMEAHLSHIERSDTCAVPACSVIAEAVVAPILANALLEKTGGDHLEEILERLNAYKASIAKQFQT.

2 residues coordinate NADP(+): Arg-40 and Arg-46. FMN contacts are provided by residues 129 to 131 (RAS), 257 to 258 (QA), Gly-302, 317 to 321 (KPIAT), and Arg-343.

It belongs to the chorismate synthase family. In terms of assembly, homotetramer. It depends on FMNH2 as a cofactor.

The catalysed reaction is 5-O-(1-carboxyvinyl)-3-phosphoshikimate = chorismate + phosphate. The protein operates within metabolic intermediate biosynthesis; chorismate biosynthesis; chorismate from D-erythrose 4-phosphate and phosphoenolpyruvate: step 7/7. Catalyzes the anti-1,4-elimination of the C-3 phosphate and the C-6 proR hydrogen from 5-enolpyruvylshikimate-3-phosphate (EPSP) to yield chorismate, which is the branch point compound that serves as the starting substrate for the three terminal pathways of aromatic amino acid biosynthesis. This reaction introduces a second double bond into the aromatic ring system. The sequence is that of Chorismate synthase from Prosthecochloris aestuarii (strain DSM 271 / SK 413).